A 74-amino-acid polypeptide reads, in one-letter code: Metallothionein-like protein type 2 (74 aa).

This sequence belongs to the metallothionein superfamily. Type 15 family.

Metallothioneins have a high content of cysteine residues that bind various heavy metals. The protein is Metallothionein-like protein type 2 of Nicotiana plumbaginifolia (Leadwort-leaved tobacco).